The following is a 405-amino-acid chain: Cystathionine gamma-lyase (405 aa).

3 residues coordinate substrate: arginine 62, tyrosine 114, and arginine 119. Residue lysine 212 is modified to N6-(pyridoxal phosphate)lysine. A substrate-binding site is contributed by glutamate 339.

Belongs to the trans-sulfuration enzymes family. Homotetramer. Interacts with CALM in a calcium-dependent manner. The cofactor is pyridoxal 5'-phosphate.

It localises to the cytoplasm. It catalyses the reaction L,L-cystathionine + H2O = 2-oxobutanoate + L-cysteine + NH4(+). It carries out the reaction L-cysteine + H2O = hydrogen sulfide + pyruvate + NH4(+) + H(+). The catalysed reaction is L-homocysteine + H2O = 2-oxobutanoate + hydrogen sulfide + NH4(+) + H(+). The enzyme catalyses L-homoserine = 2-oxobutanoate + NH4(+). It catalyses the reaction L-selenocystathionine + H2O = L-selenocysteine + 2-oxobutanoate + NH4(+). Its pathway is amino-acid biosynthesis; L-cysteine biosynthesis; L-cysteine from L-homocysteine and L-serine: step 2/2. Functionally, catalyzes the last step in the trans-sulfuration pathway from L-methionine to L-cysteine in a pyridoxal-5'-phosphate (PLP)-dependent manner, which consists on cleaving the L,L-cystathionine molecule into L-cysteine, ammonia and 2-oxobutanoate. Part of the L-cysteine derived from the trans-sulfuration pathway is utilized for biosynthesis of the ubiquitous antioxidant glutathione. Besides its role in the conversion of L-cystathionine into L-cysteine, it utilizes L-cysteine and L-homocysteine as substrates (at much lower rates than L,L-cystathionine) to produce hydrogen sulfide (H2S). In vitro, it converts two L-cysteine molecules into lanthionine and H2S, and two L-homocysteine molecules to homolanthionine and H2S, which can be particularly relevant under conditions of severe hyperhomocysteinemia. Lanthionine and homolanthionine are structural homologs of L,L-cystathionine that differ by the absence or presence of an extra methylene group, respectively. Acts as a cysteine-protein sulfhydrase by mediating sulfhydration of target proteins: sulfhydration consists of converting -SH groups into -SSH on specific cysteine residues of target proteins such as GAPDH, PTPN1 and NF-kappa-B subunit RELA, thereby regulating their function. By generating the gasotransmitter H2S, it participates in a number of physiological processes such as vasodilation, bone protection, and inflammation. Plays an essential role in myogenesis by contributing to the biogenesis of H2S in skeletal muscle tissue. Can also accept homoserine as substrate. Catalyzes the elimination of selenocystathionine (which can be derived from the diet) to yield selenocysteine, ammonia and 2-oxobutanoate. The sequence is that of Cystathionine gamma-lyase (CTH) from Macaca fascicularis (Crab-eating macaque).